A 230-amino-acid chain; its full sequence is PKHD-type hydroxylase Xfasm12_1709 (230 aa).

In terms of domain architecture, Fe2OG dioxygenase spans 78–182; it reads RTLPPRFNRY…RIASFFWVQS (105 aa). Residues His-96, Asp-98, and His-163 each contribute to the Fe cation site. A 2-oxoglutarate-binding site is contributed by Arg-173.

Fe(2+) is required as a cofactor. The cofactor is L-ascorbate.

The protein is PKHD-type hydroxylase Xfasm12_1709 of Xylella fastidiosa (strain M12).